The chain runs to 213 residues: MRQRNKPWADEYLQENNHIVISDPKSKKGNWSQLFNNNNPIHVEIGSGKGQFILGMAKQYPEINFIGIELAKSIIVSAVQKIEEENLANVFMLNENAIDVREMFADDEISMIYLNFSDPWPKNRHEKRRLTYGRFLEQYQDILGANGEVILKTDNRGLFEYSVVSFSQNGMNINEINVDLHAIQDETNVMTEYEEKFSTKGQPIYRCKAAFEK.

Residues Glu44, Glu69, Asn96, and Asp118 each contribute to the S-adenosyl-L-methionine site. Asp118 is a catalytic residue. A substrate-binding site is contributed by Lys122. An interaction with RNA region spans residues 124 to 129 (RHEKRR). Substrate contacts are provided by residues Asp154 and 191–194 (TEYE).

Belongs to the class I-like SAM-binding methyltransferase superfamily. TrmB family.

The catalysed reaction is guanosine(46) in tRNA + S-adenosyl-L-methionine = N(7)-methylguanosine(46) in tRNA + S-adenosyl-L-homocysteine. It functions in the pathway tRNA modification; N(7)-methylguanine-tRNA biosynthesis. In terms of biological role, catalyzes the formation of N(7)-methylguanine at position 46 (m7G46) in tRNA. In Oceanobacillus iheyensis (strain DSM 14371 / CIP 107618 / JCM 11309 / KCTC 3954 / HTE831), this protein is tRNA (guanine-N(7)-)-methyltransferase.